A 204-amino-acid polypeptide reads, in one-letter code: Protein LURP-one-related 14 (204 aa).

The protein belongs to the LOR family.

In terms of biological role, might be related to the phospholipid scramblase and tubby-like superfamily of membrane tethered transcription factors. This Arabidopsis thaliana (Mouse-ear cress) protein is Protein LURP-one-related 14.